The sequence spans 189 residues: Orotate phosphoribosyltransferase (189 aa).

5-phospho-alpha-D-ribose 1-diphosphate contacts are provided by residues arginine 94, lysine 95, lysine 98, and 120–128 (EDVTTTGGS). Threonine 124 and arginine 152 together coordinate orotate.

The protein belongs to the purine/pyrimidine phosphoribosyltransferase family. PyrE subfamily. Homodimer. Mg(2+) is required as a cofactor.

The enzyme catalyses orotidine 5'-phosphate + diphosphate = orotate + 5-phospho-alpha-D-ribose 1-diphosphate. It participates in pyrimidine metabolism; UMP biosynthesis via de novo pathway; UMP from orotate: step 1/2. Functionally, catalyzes the transfer of a ribosyl phosphate group from 5-phosphoribose 1-diphosphate to orotate, leading to the formation of orotidine monophosphate (OMP). The chain is Orotate phosphoribosyltransferase from Thermococcus gammatolerans (strain DSM 15229 / JCM 11827 / EJ3).